Reading from the N-terminus, the 141-residue chain is Hemoglobin subunit alpha-D (141 aa).

The 141-residue stretch at 1–141 (VLTAEDRRLL…VADVLSEKYR (141 aa)) folds into the Globin domain. Residues His-57 and His-87 each contribute to the heme b site.

This sequence belongs to the globin family. In terms of assembly, the deoxy-Hb is a heterotetramer of two alpha and two beta chains, but oxygenation results in dissociation to dimers. In terms of tissue distribution, red blood cells.

Functionally, involved in oxygen transport from the lung to the various peripheral tissues. This Erythrolamprus miliaris (South American water snake) protein is Hemoglobin subunit alpha-D (HBAD).